Here is a 274-residue protein sequence, read N- to C-terminus: Large ribosomal subunit protein uL2 (274 aa).

Residues 222–274 (GVAMNPVDHPHGGGEGRGKGHHPQSPWGQLAKGYKTRRGKKASDKLIVRRRNG) form a disordered region. Residues 229–239 (DHPHGGGEGRG) show a composition bias toward basic and acidic residues.

It belongs to the universal ribosomal protein uL2 family. In terms of assembly, part of the 50S ribosomal subunit. Forms a bridge to the 30S subunit in the 70S ribosome.

In terms of biological role, one of the primary rRNA binding proteins. Required for association of the 30S and 50S subunits to form the 70S ribosome, for tRNA binding and peptide bond formation. It has been suggested to have peptidyltransferase activity; this is somewhat controversial. Makes several contacts with the 16S rRNA in the 70S ribosome. The sequence is that of Large ribosomal subunit protein uL2 from Thermosipho africanus (strain TCF52B).